The following is a 608-amino-acid chain: Centromere DNA-binding protein complex CBF3 subunit B (608 aa).

A DNA-binding region (zn(2)-C6 fungal-type) is located at residues 14 to 42; the sequence is CSVCTRRKVKCDRMIPCGNCRKRGQDSEC. Position 575 is a phosphoserine (serine 575).

Component of the CBF3 copmplex, which is formed of CBF3A/CBF2, CBF3B/CEP3, CBF3C/CTF13 and CBF3D.

It is found in the nucleus. The protein resides in the chromosome. Its subcellular location is the centromere. Acts as a component of the centromere DNA-binding protein complex CBF3, which is essential for chromosome segregation and movement of centromeres along microtubules. CBF3 is required for the recruitment of other kinetochore complexes to CEN DNA. It plays a role in the attachment of chromosomes to the spindle and binds selectively to a highly conserved DNA sequence called CDEIII, found in centromers and in several promoters. The sequence is that of Centromere DNA-binding protein complex CBF3 subunit B (CEP3) from Saccharomyces cerevisiae (strain ATCC 204508 / S288c) (Baker's yeast).